A 151-amino-acid chain; its full sequence is Urease accessory protein UreE (151 aa).

The protein belongs to the UreE family.

It is found in the cytoplasm. Its function is as follows. Involved in urease metallocenter assembly. Binds nickel. Probably functions as a nickel donor during metallocenter assembly. The sequence is that of Urease accessory protein UreE from Lachnoclostridium phytofermentans (strain ATCC 700394 / DSM 18823 / ISDg) (Clostridium phytofermentans).